A 387-amino-acid polypeptide reads, in one-letter code: 17-beta-hydroxysteroid dehydrogenase type 2 (387 aa).

A helical; Signal-anchor for type II membrane protein membrane pass occupies residues 4 to 24 (FFSDTAWICLAVPTVLCGTVF). An NAD(+)-binding site is contributed by 82-111 (QKAVLVTGGDCGLGHALCKYLDELGFTVFA). Position 219 (Ser219) interacts with substrate. Residue Tyr232 is part of the active site.

It belongs to the short-chain dehydrogenases/reductases (SDR) family. In terms of assembly, homodimer. Expressed in placenta.

It localises to the endoplasmic reticulum membrane. The enzyme catalyses 17beta-estradiol + NAD(+) = estrone + NADH + H(+). It catalyses the reaction testosterone + NAD(+) = androst-4-ene-3,17-dione + NADH + H(+). The catalysed reaction is 17beta-hydroxy-5alpha-androstan-3-one + NAD(+) = 5alpha-androstan-3,17-dione + NADH + H(+). It carries out the reaction (20S)-hydroxypregn-4-en-3-one + NAD(+) = progesterone + NADH + H(+). Its function is as follows. Catalyzes the NAD-dependent oxidation of the highly active 17beta-hydroxysteroids, such as estradiol (E2), testosterone (T), and dihydrotestosterone (DHT), to their less active forms and thus regulates the biological potency of these steroids. Oxidizes estradiol to estrone, testosterone to androstenedione, and dihydrotestosterone to 5alpha-androstan-3,17-dione. Also has 20-alpha-HSD activity. The sequence is that of 17-beta-hydroxysteroid dehydrogenase type 2 from Homo sapiens (Human).